The following is a 393-amino-acid chain: MTTYSDKGAKPERGRFLHFHSVTFWVGNAKQATSFYCSKMGFEPLAYRGLETGSREVVSHVIKQGKIVFVLSSALNPWNKEMGDHLVKHGDGVKDIAFEVEDCDYIVQKARERGAKIMREPWVEQDKFGKVKFAVLQTYGDTTHTLVEKMNYIGQFLPGYEAPAFMDPLLPKLPKCSLEMIDHIVGNQPDQEMVSASEWYLKNLQFHRFWSVDDTQVHTEYSSLRSIVVANYEESIKMPINEPAPGKKKSQIQEYVDYNGGAGVQHIALKTEDIITAIRHLRERGLEFLSVPSTYYKQLREKLKTAKIKVKENIDALEELKILVDYDEKGYLLQIFTKPVQDRPTLFLEVIQRHNHQGFGAGNFNSLFKAFEEEQNLRGNLTNMETNGVVPGM.

At threonine 2 the chain carries N-acetylthreonine. 2 consecutive VOC domains span residues 18-149 (HFHS…LVEK) and 180-338 (MIDH…IFTK). N6-succinyllysine is present on lysine 132. Fe cation is bound at residue histidine 183. Phosphoserine is present on residues serine 211, serine 226, and serine 250. Fe cation is bound by residues histidine 266 and glutamate 349.

It belongs to the 4HPPD family. As to quaternary structure, homodimer. Requires Fe cation as cofactor.

The protein localises to the cytoplasm. Its subcellular location is the endoplasmic reticulum membrane. It localises to the golgi apparatus membrane. The catalysed reaction is 3-(4-hydroxyphenyl)pyruvate + O2 = homogentisate + CO2. Its pathway is amino-acid degradation; L-phenylalanine degradation; acetoacetate and fumarate from L-phenylalanine: step 3/6. Catalyzes the conversion of 4-hydroxyphenylpyruvic acid to homogentisic acid, one of the steps in tyrosine catabolism. The chain is 4-hydroxyphenylpyruvate dioxygenase (HPD) from Homo sapiens (Human).